The chain runs to 227 residues: Cytochrome c oxidase subunit 2 (227 aa).

Residues 1 to 14 are Mitochondrial intermembrane-facing; sequence MAHAAQVGLQDATS. The helical transmembrane segment at 15 to 45 threads the bilayer; sequence PIMEELITFHDHALMIIFLICFLVLYALFLT. At 46–59 the chain is on the mitochondrial matrix side; the sequence is LTTKLTNTNISDAQ. The helical transmembrane segment at 60–87 threads the bilayer; sequence EMETVWTILPAIILVLIALPSLRILYMT. Topologically, residues 88–227 are mitochondrial intermembrane; the sequence is DEVNDPSLTI…IFEMGPVFTL (140 aa). 6 residues coordinate Cu cation: histidine 161, cysteine 196, glutamate 198, cysteine 200, histidine 204, and methionine 207. Glutamate 198 lines the Mg(2+) pocket.

This sequence belongs to the cytochrome c oxidase subunit 2 family. In terms of assembly, component of the cytochrome c oxidase (complex IV, CIV), a multisubunit enzyme composed of 14 subunits. The complex is composed of a catalytic core of 3 subunits MT-CO1, MT-CO2 and MT-CO3, encoded in the mitochondrial DNA, and 11 supernumerary subunits COX4I1 (or COX4I2), COX5A, COX5B, COX6A1 (or COX6A2), COX6B1 (or COX6B2), COX6C, COX7A2 (or COX7A1), COX7B, COX7C, COX8A and NDUFA4, which are encoded in the nuclear genome. The complex exists as a monomer or a dimer and forms supercomplexes (SCs) in the inner mitochondrial membrane with NADH-ubiquinone oxidoreductase (complex I, CI) and ubiquinol-cytochrome c oxidoreductase (cytochrome b-c1 complex, complex III, CIII), resulting in different assemblies (supercomplex SCI(1)III(2)IV(1) and megacomplex MCI(2)III(2)IV(2)). Found in a complex with TMEM177, COA6, COX18, COX20, SCO1 and SCO2. Interacts with TMEM177 in a COX20-dependent manner. Interacts with COX20. Interacts with COX16. Cu cation serves as cofactor.

The protein localises to the mitochondrion inner membrane. It catalyses the reaction 4 Fe(II)-[cytochrome c] + O2 + 8 H(+)(in) = 4 Fe(III)-[cytochrome c] + 2 H2O + 4 H(+)(out). In terms of biological role, component of the cytochrome c oxidase, the last enzyme in the mitochondrial electron transport chain which drives oxidative phosphorylation. The respiratory chain contains 3 multisubunit complexes succinate dehydrogenase (complex II, CII), ubiquinol-cytochrome c oxidoreductase (cytochrome b-c1 complex, complex III, CIII) and cytochrome c oxidase (complex IV, CIV), that cooperate to transfer electrons derived from NADH and succinate to molecular oxygen, creating an electrochemical gradient over the inner membrane that drives transmembrane transport and the ATP synthase. Cytochrome c oxidase is the component of the respiratory chain that catalyzes the reduction of oxygen to water. Electrons originating from reduced cytochrome c in the intermembrane space (IMS) are transferred via the dinuclear copper A center (CU(A)) of subunit 2 and heme A of subunit 1 to the active site in subunit 1, a binuclear center (BNC) formed by heme A3 and copper B (CU(B)). The BNC reduces molecular oxygen to 2 water molecules using 4 electrons from cytochrome c in the IMS and 4 protons from the mitochondrial matrix. In Homo sapiens (Human), this protein is Cytochrome c oxidase subunit 2 (MT-CO2).